A 65-amino-acid polypeptide reads, in one-letter code: ECSKQLGESCKCNKQCCGATVICGTIYVGGKEENLCIEKTSNNAILNFFGKIAHVVENGLSFSCD.

Post-translationally, contains 4 disulfide bonds. In terms of tissue distribution, expressed by the venom gland.

The protein localises to the secreted. In terms of biological role, intrathorax injection into crickets causes paralysis prolonged for more than 60 minutes, followed by recovery. This chain is U15-hexatoxin-Mg1a, found in Macrothele gigas (Japanese funnel web spider).